The sequence spans 104 residues: Large ribosomal subunit protein uL23 (104 aa).

Belongs to the universal ribosomal protein uL23 family. As to quaternary structure, part of the 50S ribosomal subunit. Contacts protein L29, and trigger factor when it is bound to the ribosome.

One of the early assembly proteins it binds 23S rRNA. One of the proteins that surrounds the polypeptide exit tunnel on the outside of the ribosome. Forms the main docking site for trigger factor binding to the ribosome. This chain is Large ribosomal subunit protein uL23, found in Polynucleobacter necessarius subsp. necessarius (strain STIR1).